We begin with the raw amino-acid sequence, 610 residues long: UvrABC system protein C (610 aa).

The 79-residue stretch at 13 to 91 folds into the GIY-YIG domain; the sequence is HLPGVYRMYD…IKENQPKYNV (79 aa). The UVR domain occupies 201–236; it reads GQVVEHLVQKMENAAQELDFEAAARFRDQIQSVRAV.

It belongs to the UvrC family. Interacts with UvrB in an incision complex.

The protein resides in the cytoplasm. Functionally, the UvrABC repair system catalyzes the recognition and processing of DNA lesions. UvrC both incises the 5' and 3' sides of the lesion. The N-terminal half is responsible for the 3' incision and the C-terminal half is responsible for the 5' incision. In Actinobacillus pleuropneumoniae serotype 5b (strain L20), this protein is UvrABC system protein C.